Reading from the N-terminus, the 255-residue chain is Mediator of RNA polymerase II transcription subunit 18 (255 aa).

The protein belongs to the Mediator complex subunit 18 family. In terms of assembly, component of the Mediator complex.

The protein localises to the nucleus. Functionally, component of the Mediator complex, a coactivator involved in the regulated transcription of nearly all RNA polymerase II-dependent genes. Mediator functions as a bridge to convey information from gene-specific regulatory proteins to the basal RNA polymerase II transcription machinery. Mediator is recruited to promoters by direct interactions with regulatory proteins and serves as a scaffold for the assembly of a functional preinitiation complex with RNA polymerase II and the general transcription factors. The chain is Mediator of RNA polymerase II transcription subunit 18 (SRB5) from Kluyveromyces lactis (strain ATCC 8585 / CBS 2359 / DSM 70799 / NBRC 1267 / NRRL Y-1140 / WM37) (Yeast).